The following is a 305-amino-acid chain: Beta-carotene 3-hydroxylase, chloroplastic (305 aa).

A chloroplast-targeting transit peptide spans 1 to 41 (MAFAMSSSLTLFQYQSFGKKPFFSRRRDFAGCSMMNPLVAR). Helical transmembrane passes span 98 to 118 (YLVAAMASSLGFTFMAAAAVY) and 129 to 149 (AVPLTEMMGTFSLAVGSAVGM). One can recognise a Fatty acid hydroxylase domain in the interval 146-272 (AVGMEYWARW…KFNGVPYGLF (127 aa)). Residues 157 to 162 (HRALWH) carry the Histidine box-1 motif. Residues 169–173 (HESHH) carry the Histidine box-2 motif. 2 helical membrane passes run 184 to 204 (DVFALINAFPAVALLAFGFFH) and 207 to 227 (FFSGLCFGAGLGITLYGMAYM). A Histidine box-3 motif is present at residues 230 to 235 (HDGLVH). The Histidine box-4 signature appears at 256-260 (HQIHH).

It belongs to the sterol desaturase family. As to quaternary structure, homodimer. In terms of tissue distribution, expressed in flower buds and lips. Detected in roots and leaves.

Its subcellular location is the plastid. The protein localises to the chloroplast membrane. It catalyses the reaction all-trans-beta-carotene + 4 reduced [2Fe-2S]-[ferredoxin] + 2 O2 + 4 H(+) = all-trans-zeaxanthin + 4 oxidized [2Fe-2S]-[ferredoxin] + 2 H2O. Functionally, nonheme diiron monooxygenase involved in the biosynthesis of xanthophylls. Specific for beta-ring hydroxylations of beta-carotene. Uses ferredoxin as an electron donor. This chain is Beta-carotene 3-hydroxylase, chloroplastic (BHY), found in Oncidium hybrid cultivar (Orchid).